The sequence spans 461 residues: Fumarate hydratase class II (461 aa).

Residues Ser-97–Thr-99, His-127–Asp-130, Ser-137–Asn-139, and Thr-185 contribute to the substrate site. The Proton donor/acceptor role is filled by His-186. Ser-316 is a catalytic residue. Substrate-binding positions include Ser-317 and Lys-322–Asn-324.

The protein belongs to the class-II fumarase/aspartase family. Fumarase subfamily. Homotetramer.

The protein localises to the cytoplasm. The catalysed reaction is (S)-malate = fumarate + H2O. It functions in the pathway carbohydrate metabolism; tricarboxylic acid cycle; (S)-malate from fumarate: step 1/1. In terms of biological role, involved in the TCA cycle. Catalyzes the stereospecific interconversion of fumarate to L-malate. This is Fumarate hydratase class II from Staphylococcus saprophyticus subsp. saprophyticus (strain ATCC 15305 / DSM 20229 / NCIMB 8711 / NCTC 7292 / S-41).